A 404-amino-acid polypeptide reads, in one-letter code: Serine/threonine transporter SstT (404 aa).

9 helical membrane passes run 17-37 (IGIG…VTAI), 44-64 (FVGA…VQAI), 75-95 (ITLI…VAVI), 138-158 (ALAT…GLAL), 179-199 (IVVW…FSTV), 212-232 (LLIL…NPLL), 287-307 (IPLG…VLTL), 319-339 (FLTA…ASGV), and 354-374 (FGIS…VGVI).

Belongs to the dicarboxylate/amino acid:cation symporter (DAACS) (TC 2.A.23) family.

It localises to the cell membrane. It carries out the reaction L-serine(in) + Na(+)(in) = L-serine(out) + Na(+)(out). The catalysed reaction is L-threonine(in) + Na(+)(in) = L-threonine(out) + Na(+)(out). Involved in the import of serine and threonine into the cell, with the concomitant import of sodium (symport system). This Streptococcus equi subsp. zooepidemicus (strain MGCS10565) protein is Serine/threonine transporter SstT.